We begin with the raw amino-acid sequence, 447 residues long: GTPase Der (447 aa).

2 EngA-type G domains span residues 4-165 and 180-357; these read QIIT…PEEE and LQIV…KIWN. GTP contacts are provided by residues 10 to 17, 57 to 61, 119 to 122, 186 to 193, 233 to 237, and 298 to 301; these read GRPNVGKS, DTPGL, NKCE, GRPNAGKS, DTAGL, and NKWD. Residues 358–443 enclose the KH-like domain; that stretch reads KKITTSKLNE…PIRFIYVKTK (86 aa).

Belongs to the TRAFAC class TrmE-Era-EngA-EngB-Septin-like GTPase superfamily. EngA (Der) GTPase family. As to quaternary structure, associates with the 50S ribosomal subunit.

Functionally, GTPase that plays an essential role in the late steps of ribosome biogenesis. The protein is GTPase Der of Rickettsia africae (strain ESF-5).